Consider the following 427-residue polypeptide: Enolase (427 aa).

Position 163 (Gln163) interacts with (2R)-2-phosphoglycerate. The active-site Proton donor is Glu205. Mg(2+) is bound by residues Asp242, Glu285, and Asp312. (2R)-2-phosphoglycerate is bound by residues Lys337, Arg366, Ser367, and Lys388. The Proton acceptor role is filled by Lys337.

Belongs to the enolase family. Requires Mg(2+) as cofactor.

It is found in the cytoplasm. Its subcellular location is the secreted. It localises to the cell surface. The enzyme catalyses (2R)-2-phosphoglycerate = phosphoenolpyruvate + H2O. It participates in carbohydrate degradation; glycolysis; pyruvate from D-glyceraldehyde 3-phosphate: step 4/5. Functionally, catalyzes the reversible conversion of 2-phosphoglycerate (2-PG) into phosphoenolpyruvate (PEP). It is essential for the degradation of carbohydrates via glycolysis. This chain is Enolase, found in Bradyrhizobium sp. (strain ORS 278).